The following is a 196-amino-acid chain: ATP-dependent Clp protease proteolytic subunit (196 aa).

Ser101 functions as the Nucleophile in the catalytic mechanism. His126 is a catalytic residue.

It belongs to the peptidase S14 family. Component of the chloroplastic Clp protease core complex.

Its subcellular location is the plastid. It localises to the chloroplast stroma. It catalyses the reaction Hydrolysis of proteins to small peptides in the presence of ATP and magnesium. alpha-casein is the usual test substrate. In the absence of ATP, only oligopeptides shorter than five residues are hydrolyzed (such as succinyl-Leu-Tyr-|-NHMec, and Leu-Tyr-Leu-|-Tyr-Trp, in which cleavage of the -Tyr-|-Leu- and -Tyr-|-Trp bonds also occurs).. Cleaves peptides in various proteins in a process that requires ATP hydrolysis. Has a chymotrypsin-like activity. Plays a major role in the degradation of misfolded proteins. This is ATP-dependent Clp protease proteolytic subunit from Arabis hirsuta (Hairy rock-cress).